Consider the following 362-residue polypeptide: Ribosome-binding ATPase YchF (362 aa).

The OBG-type G domain occupies 3–255; that stretch reads FKCGIIGLPN…MSDEEKKSFM (253 aa). Residue 12-17 coordinates ATP; sequence NVGKST. The Mg(2+) site is built by Ser-16 and Thr-36. Residues 277-360 enclose the TGS domain; sequence NLITFFTVGD…QDGDIIHFLF (84 aa).

This sequence belongs to the TRAFAC class OBG-HflX-like GTPase superfamily. OBG GTPase family. YchF/OLA1 subfamily. The cofactor is Mg(2+).

Functionally, ATPase that binds to both the 70S ribosome and the 50S ribosomal subunit in a nucleotide-independent manner. This is Ribosome-binding ATPase YchF from Buchnera aphidicola subsp. Acyrthosiphon pisum (strain APS) (Acyrthosiphon pisum symbiotic bacterium).